The primary structure comprises 329 residues: Ketol-acid reductoisomerase (NADP(+)) (329 aa).

Positions 2–182 constitute a KARI N-terminal Rossmann domain; it reads TQLFYDTDAD…GGTRAGILET (181 aa). Residues 25-28, Ser51, Ser53, and 83-86 contribute to the NADP(+) site; these read YGSQ and DEFQ. The active site involves His108. Gly134 serves as a coordination point for NADP(+). One can recognise a KARI C-terminal knotted domain in the interval 183–328; that stretch reads NFKEETETDL…KSLRSMFSWL (146 aa). 4 residues coordinate Mg(2+): Asp191, Glu195, Glu227, and Glu231. Substrate is bound at residue Ser252.

It belongs to the ketol-acid reductoisomerase family. Mg(2+) serves as cofactor.

The enzyme catalyses (2R)-2,3-dihydroxy-3-methylbutanoate + NADP(+) = (2S)-2-acetolactate + NADPH + H(+). It carries out the reaction (2R,3R)-2,3-dihydroxy-3-methylpentanoate + NADP(+) = (S)-2-ethyl-2-hydroxy-3-oxobutanoate + NADPH + H(+). It functions in the pathway amino-acid biosynthesis; L-isoleucine biosynthesis; L-isoleucine from 2-oxobutanoate: step 2/4. It participates in amino-acid biosynthesis; L-valine biosynthesis; L-valine from pyruvate: step 2/4. In terms of biological role, involved in the biosynthesis of branched-chain amino acids (BCAA). Catalyzes an alkyl-migration followed by a ketol-acid reduction of (S)-2-acetolactate (S2AL) to yield (R)-2,3-dihydroxy-isovalerate. In the isomerase reaction, S2AL is rearranged via a Mg-dependent methyl migration to produce 3-hydroxy-3-methyl-2-ketobutyrate (HMKB). In the reductase reaction, this 2-ketoacid undergoes a metal-dependent reduction by NADPH to yield (R)-2,3-dihydroxy-isovalerate. The protein is Ketol-acid reductoisomerase (NADP(+)) of Prochlorococcus marinus (strain MIT 9301).